A 396-amino-acid chain; its full sequence is KiSS-1 receptor (396 aa).

The Extracellular portion of the chain corresponds to 1–46; the sequence is MAAEATLGPNVSWWAPSNASGCPGCGVNASDGPGSAPRPLDAWLVP. Asn-10, Asn-18, and Asn-28 each carry an N-linked (GlcNAc...) asparagine glycan. The helical transmembrane segment at 47–67 threads the bilayer; sequence LFFAALMLLGLVGNSLVIFVI. Over 68–90 the chain is Cytoplasmic; that stretch reads CRHKHMQTVTNFYIANLAATDVT. A helical membrane pass occupies residues 91–111; it reads FLLCCVPFTALLYPLPTWVLG. At 112–120 the chain is on the extracellular side; sequence DFMCKFVNY. Residues Cys-115 and Cys-191 are joined by a disulfide bond. A helical transmembrane segment spans residues 121 to 138; it reads IQQVSVQATCATLTAMSV. At 139–159 the chain is on the cytoplasmic side; sequence DRWYVTVFPLRALHRRTPRLA. A helical membrane pass occupies residues 160–180; it reads LTVSLSIWVGSAAVSAPVLAL. Topologically, residues 181–202 are extracellular; sequence HRLSPGPHTYCSEAFPSRALER. A helical transmembrane segment spans residues 203 to 223; it reads AFALYNLLALYLLPLLATCAC. Over 224–264 the chain is Cytoplasmic; sequence YGAMLRHLGRAAVRPAPTDGALQGQLLAQRAGAVRTKVSRL. Residues 265 to 285 traverse the membrane as a helical segment; that stretch reads VAAVVLLFAACWGPIQLFLVL. Over 286 to 305 the chain is Extracellular; it reads QALGPSGAWHPRSYAAYALK. A helical transmembrane segment spans residues 306–326; it reads IWAHCMSYSNSALNPLLYAFL. Over 327–396 the chain is Cytoplasmic; sequence GSHFRQAFCR…SVQDEHTAPL (70 aa). The disordered stretch occupies residues 346–396; sequence RRPHASAHSDRAAPHSVPHSRAAHPVRVRTPEPGNPVRRSPSVQDEHTAPL.

It belongs to the G-protein coupled receptor 1 family. As to expression, highest expression levels in the cerebrum and cecum. Moderate expression in the ovary, colon and placenta. Low levels in the uterus, small intestine, and thymus. Expressed only moderately in the placenta. No expression in kidney tissues. Has a complex and abundant central nervous system expression pattern. Expressed in brain regions such as pons, midbrain, thalamus, hypothalamus, hippocampus, amygdala, cortex, frontal cortex, and striatum. No expression in the cerebellum. Persistent expression is detected in hypothalamus throughout postnatal development, with maximum expression levels at puberty in both male and female. Hypothalamic expression changed throughout the estrus cycle and is significantly increased after gonadectomy, a rise that is prevented by sex steroid replacement both in males and females.

It localises to the cell membrane. Receptor for metastin, a C-terminally amidated peptide of KiSS1. KiSS1 is a metastasis suppressor protein. Activation of the receptor inhibits cell proliferation and cell migration, key characteristics of tumor metastasis. The receptor is essential for normal gonadotropin-released hormone physiology and for puberty. The hypothalamic KiSS1/KISS1R system is a pivotal factor in central regulation of the gonadotropic axis at puberty and in adulthood. Analysis of the transduction pathways activated by the receptor identifies coupling to phospholipase C and intracellular calcium release through pertussis toxin-insensitive G(q) proteins. This chain is KiSS-1 receptor (Kiss1r), found in Rattus norvegicus (Rat).